Reading from the N-terminus, the 215-residue chain is Phosphatidylserine decarboxylase proenzyme (215 aa).

Catalysis depends on Ser-186, which acts as the Schiff-base intermediate with substrate; via pyruvic acid. Ser-186 is subject to Pyruvic acid (Ser); by autocatalysis.

The protein belongs to the phosphatidylserine decarboxylase family. PSD-A subfamily. As to quaternary structure, heterodimer of a large membrane-associated beta subunit and a small pyruvoyl-containing alpha subunit. It depends on pyruvate as a cofactor. In terms of processing, is synthesized initially as an inactive proenzyme. Formation of the active enzyme involves a self-maturation process in which the active site pyruvoyl group is generated from an internal serine residue via an autocatalytic post-translational modification. Two non-identical subunits are generated from the proenzyme in this reaction, and the pyruvate is formed at the N-terminus of the alpha chain, which is derived from the carboxyl end of the proenzyme. The post-translation cleavage follows an unusual pathway, termed non-hydrolytic serinolysis, in which the side chain hydroxyl group of the serine supplies its oxygen atom to form the C-terminus of the beta chain, while the remainder of the serine residue undergoes an oxidative deamination to produce ammonia and the pyruvoyl prosthetic group on the alpha chain.

The protein localises to the cell membrane. The catalysed reaction is a 1,2-diacyl-sn-glycero-3-phospho-L-serine + H(+) = a 1,2-diacyl-sn-glycero-3-phosphoethanolamine + CO2. The protein operates within phospholipid metabolism; phosphatidylethanolamine biosynthesis; phosphatidylethanolamine from CDP-diacylglycerol: step 2/2. Functionally, catalyzes the formation of phosphatidylethanolamine (PtdEtn) from phosphatidylserine (PtdSer). This is Phosphatidylserine decarboxylase proenzyme from Pelagibacter ubique (strain HTCC1062).